The chain runs to 241 residues: 15,16-dihydrobiliverdin:ferredoxin oxidoreductase (241 aa).

This sequence belongs to the HY2 family.

It carries out the reaction 15,16-dihydrobiliverdin + oxidized 2[4Fe-4S]-[ferredoxin] = biliverdin IXalpha + reduced 2[4Fe-4S]-[ferredoxin] + 2 H(+). In terms of biological role, catalyzes the two-electron reduction of biliverdin IX-alpha at the C15 methine bridge. In Prochlorococcus marinus (strain SARG / CCMP1375 / SS120), this protein is 15,16-dihydrobiliverdin:ferredoxin oxidoreductase (pebA).